The chain runs to 174 residues: ATP-dependent protease subunit HslV (174 aa).

The active site involves Thr-2. Residues Gly-157, Cys-160, and Thr-163 each contribute to the Na(+) site.

The protein belongs to the peptidase T1B family. HslV subfamily. As to quaternary structure, a double ring-shaped homohexamer of HslV is capped on each side by a ring-shaped HslU homohexamer. The assembly of the HslU/HslV complex is dependent on binding of ATP.

Its subcellular location is the cytoplasm. It catalyses the reaction ATP-dependent cleavage of peptide bonds with broad specificity.. Allosterically activated by HslU binding. Its function is as follows. Protease subunit of a proteasome-like degradation complex believed to be a general protein degrading machinery. This Shewanella denitrificans (strain OS217 / ATCC BAA-1090 / DSM 15013) protein is ATP-dependent protease subunit HslV.